A 442-amino-acid chain; its full sequence is Probable glycine dehydrogenase (decarboxylating) subunit 1 (442 aa).

Belongs to the GcvP family. N-terminal subunit subfamily. In terms of assembly, the glycine cleavage system is composed of four proteins: P, T, L and H. In this organism, the P 'protein' is a heterodimer of two subunits.

The catalysed reaction is N(6)-[(R)-lipoyl]-L-lysyl-[glycine-cleavage complex H protein] + glycine + H(+) = N(6)-[(R)-S(8)-aminomethyldihydrolipoyl]-L-lysyl-[glycine-cleavage complex H protein] + CO2. Its function is as follows. The glycine cleavage system catalyzes the degradation of glycine. The P protein binds the alpha-amino group of glycine through its pyridoxal phosphate cofactor; CO(2) is released and the remaining methylamine moiety is then transferred to the lipoamide cofactor of the H protein. The protein is Probable glycine dehydrogenase (decarboxylating) subunit 1 of Geotalea daltonii (strain DSM 22248 / JCM 15807 / FRC-32) (Geobacter daltonii).